A 126-amino-acid polypeptide reads, in one-letter code: Holo-[acyl-carrier-protein] synthase (126 aa).

2 residues coordinate Mg(2+): Asp8 and Glu59.

It belongs to the P-Pant transferase superfamily. AcpS family. It depends on Mg(2+) as a cofactor.

The protein resides in the cytoplasm. The enzyme catalyses apo-[ACP] + CoA = holo-[ACP] + adenosine 3',5'-bisphosphate + H(+). Functionally, transfers the 4'-phosphopantetheine moiety from coenzyme A to a Ser of acyl-carrier-protein. This chain is Holo-[acyl-carrier-protein] synthase, found in Rickettsia prowazekii (strain Madrid E).